Reading from the N-terminus, the 24-residue chain is Ascaphin-2 (24 aa).

In terms of tissue distribution, expressed by the skin glands.

Its subcellular location is the secreted. Its function is as follows. Antimicrobial peptide that shows higher potency against Gram-negative bacteria than against Gram-positive bacteria. Has a very week hemolytic activity. The protein is Ascaphin-2 of Ascaphus truei (Coastal tailed frog).